The chain runs to 249 residues: 3-deoxy-manno-octulosonate cytidylyltransferase (249 aa).

Belongs to the KdsB family.

It localises to the cytoplasm. The catalysed reaction is 3-deoxy-alpha-D-manno-oct-2-ulosonate + CTP = CMP-3-deoxy-beta-D-manno-octulosonate + diphosphate. It functions in the pathway nucleotide-sugar biosynthesis; CMP-3-deoxy-D-manno-octulosonate biosynthesis; CMP-3-deoxy-D-manno-octulosonate from 3-deoxy-D-manno-octulosonate and CTP: step 1/1. Its pathway is bacterial outer membrane biogenesis; lipopolysaccharide biosynthesis. Activates KDO (a required 8-carbon sugar) for incorporation into bacterial lipopolysaccharide in Gram-negative bacteria. The chain is 3-deoxy-manno-octulosonate cytidylyltransferase from Photorhabdus laumondii subsp. laumondii (strain DSM 15139 / CIP 105565 / TT01) (Photorhabdus luminescens subsp. laumondii).